The primary structure comprises 631 residues: Phosphomethylpyrimidine synthase (631 aa).

Residues N239, M268, Y297, H333, 353-355 (SRG), 394-397 (DGLR), and E433 each bind substrate. H437 lines the Zn(2+) pocket. Y460 is a substrate binding site. H501 contributes to the Zn(2+) binding site. C581, C584, and C589 together coordinate [4Fe-4S] cluster.

The protein belongs to the ThiC family. In terms of assembly, homodimer. The cofactor is [4Fe-4S] cluster.

It carries out the reaction 5-amino-1-(5-phospho-beta-D-ribosyl)imidazole + S-adenosyl-L-methionine = 4-amino-2-methyl-5-(phosphooxymethyl)pyrimidine + CO + 5'-deoxyadenosine + formate + L-methionine + 3 H(+). It participates in cofactor biosynthesis; thiamine diphosphate biosynthesis. Catalyzes the synthesis of the hydroxymethylpyrimidine phosphate (HMP-P) moiety of thiamine from aminoimidazole ribotide (AIR) in a radical S-adenosyl-L-methionine (SAM)-dependent reaction. This chain is Phosphomethylpyrimidine synthase, found in Escherichia coli O6:H1 (strain CFT073 / ATCC 700928 / UPEC).